Consider the following 226-residue polypeptide: UPF0758 protein SPJ_1027 (226 aa).

The 123-residue stretch at 103–225 (SILSSQKLAK…YFSYREKTDL (123 aa)) folds into the MPN domain. Zn(2+)-binding residues include H174, H176, and D187. Positions 174-187 (HNHPSGAVAPSQND) match the JAMM motif motif.

The protein belongs to the UPF0758 family.

This is UPF0758 protein SPJ_1027 from Streptococcus pneumoniae (strain JJA).